The following is a 235-amino-acid chain: Ribitol-5-phosphate cytidylyltransferase (235 aa).

CTP is bound by residues 7–10, 82–88, and S113; these read LAGG and GADRNTS.

Belongs to the IspD/TarI cytidylyltransferase family. TarI subfamily.

The enzyme catalyses D-ribitol 5-phosphate + CTP + H(+) = CDP-L-ribitol + diphosphate. It participates in cell wall biogenesis; poly(ribitol phosphate) teichoic acid biosynthesis. Its function is as follows. Catalyzes the transfer of the cytidylyl group of CTP to D-ribitol 5-phosphate. The polypeptide is Ribitol-5-phosphate cytidylyltransferase (Streptococcus pneumoniae (strain CGSP14)).